Consider the following 429-residue polypeptide: Histidinol dehydrogenase (429 aa).

3 residues coordinate NAD(+): Tyr131, Gln193, and Asn216. Residues Ser239, Gln261, and His264 each contribute to the substrate site. Residues Gln261 and His264 each contribute to the Zn(2+) site. Catalysis depends on proton acceptor residues Glu327 and His328. His328, Asp361, Glu415, and His420 together coordinate substrate. Zn(2+) is bound at residue Asp361. A Zn(2+)-binding site is contributed by His420.

This sequence belongs to the histidinol dehydrogenase family. Requires Zn(2+) as cofactor.

It carries out the reaction L-histidinol + 2 NAD(+) + H2O = L-histidine + 2 NADH + 3 H(+). It participates in amino-acid biosynthesis; L-histidine biosynthesis; L-histidine from 5-phospho-alpha-D-ribose 1-diphosphate: step 9/9. Functionally, catalyzes the sequential NAD-dependent oxidations of L-histidinol to L-histidinaldehyde and then to L-histidine. The protein is Histidinol dehydrogenase (hisD) of Methanocaldococcus jannaschii (strain ATCC 43067 / DSM 2661 / JAL-1 / JCM 10045 / NBRC 100440) (Methanococcus jannaschii).